Here is a 459-residue protein sequence, read N- to C-terminus: ATP-dependent RNA helicase me31b (459 aa).

Positions 1-267 (MMTEKLNSGH…EINLMEELTL (267 aa)) are recA-like domain 1. Phosphoserine occurs at positions 8 and 29. The Q motif motif lies at 58-86 (NEFEEFCLKRELLMGIFEKGWERPSPIQE). The 171-residue stretch at 89-259 (IPIALSGKDV…EKHLREPYEI (171 aa)) folds into the Helicase ATP-binding domain. 102-109 (AKNGTGKT) lines the ATP pocket. The DEAD box motif lies at 207–210 (DEAD). The interval 264 to 431 (ELTLKGVTQY…PKVIDPALYV (168 aa)) is gyf binding. The Helicase C-terminal domain maps to 269–429 (GVTQYYAFVQ…PIPKVIDPAL (161 aa)). The recA-like domain 2 stretch occupies residues 432-459 (ANVGASVGDTCNNSDLNNSANEEGNVSK). Position 450 is a phosphoserine (Ser-450).

Belongs to the DEAD box helicase family. DDX6/DHH1 subfamily. In terms of assembly, conserved component of different types of multiprotein ribonucleoprotein complexes (RNPs) that form distinct germ granules (P-body, nuage, sponge body or polar granules) and P-body-like neuronal RNPs. Consequently it interacts with a wide variety of proteins, some of which appear to be common interactive partners in almost all RNPs types i.e. cup and tral, whereas other interactions are specific to a germ granule/RNP. Core functional components in me31B-containing RNPs include RNA regulatory proteins (such as translational repressor, RNA-decapping and exonuclease proteins), RNA localization proteins and additional proteins depending on the biological context of the RNPs. In the P-body RNPs, interacts with at least the translation repressor proteins tral, cup and Edc3, and the mRNA localization factor yps. Interaction with tral or Edc3 is required for translation repression and possibly RNA decapping; binding to tral and Edc3 is mutually exclusive. In the nuage and germ plasm polar granule RNPs, interacts with at least tral, cup, and additional proteins required for assembly and function of the germ granules such as tud, vas and aub. Interacts (when dimethylated on Arg residues) with tud; interaction is RNA-independent. Component of the osk RNP complex, which is composed of at least me31B, exu, yps, aret/bruno, cup, and the mRNA of osk. Component of the nanos RNP complex, which is composed of at least smg, cup, tral, me31B, the CCR4-NOT complex members Rga/NOT2 and Caf1-55, and the mRNA of nanos (nos). Interacts with tral and piRNA pathway components papi and AGO3; promotes interaction between nuage RNPs and the piRNA-mediated transposon silencing. Forms a RNP containing at least me31B, eIF4E1, cup, tral and pAbp; this interaction is required for the translational silencing of maternal mRNAs during the maternal-to-zygotic transition. In the sponge body, forms a RNP containing at least me31B, exu, yps and the mRNA of osk; interactions with exu and yps are RNA dependent. Component of a neuronal RNP, at least composed of me31B, tral and Fmr1. Component of the Atx2-Not1 repressor complex, composed of at least me31B, Atx2, tyf and pAbp. Interacts (via the C-terminus) with Atx2, tyf, pAbp and Lsm12a. Interacts (via RecA-like domain 2) with 4EHP-GYF2 complex member Gyf (via the me31B binding motif). Interacts with 4E-T, Edc3 and Patr-1. In terms of processing, symmetrically dimethylated on arginine residues. As to expression, ubiquitously expressed throughout the brain (at protein level). Expressed in the olfactory system including the antennal lobes, projection neurons, local interneurons, mushroom-body Kenyon cells and glial cells (at protein level).

The protein localises to the cytoplasm. It localises to the cytoplasmic ribonucleoprotein granule. Its subcellular location is the P-body. The protein resides in the endoplasmic reticulum. It is found in the cell projection. The protein localises to the dendrite. It carries out the reaction ATP + H2O = ADP + phosphate + H(+). In terms of biological role, ATP-dependent RNA helicase which is a core component of a variety of ribonucleoprotein complexes (RNPs) that play critical roles in translational repression and mRNA decapping during embryogenesis, oogenesis, neurogenesis and neurotransmission. Recruits core components and translational repressors to some RNP complexes, and mediates RNP aggregation into processing granules such as P-bodies. As part of a RNP complex containing tral, eIF4E1, cup, and pAbp, involved in RNP-mediated translational repression of maternal mRNAs during oogenesis and embryogenesis. As part of a RNP complex containing tral and the RNA localization factors exu and yps, mediates translational silencing of mRNAs such as osk/oskar and bcd/bicoid during their transport to the oocyte in order to prevent their translation until they reach their positional destinations. In neurons and possibly imaginal disks, involved in miRNA-mediated translational repression, possibly in association with components of the piRNA transposon silencing pathway. Involved in RNA localization and protein trafficking in the oocyte. As part of an ER-associated RNP containing tral, cup and yps, required for tral-dependent ER exit site formation and consequently efficient trafficking of proteins such as grk and yl through the secretory pathway. Component of neuron RNPs that mediate transport and translation of neuronal RNAs, including translation repression of synaptic transcripts in preparation for their dendritic targeting. As part of the Atx2-Not1 repressor complex promotes Not1-dependent post-transcriptional gene silencing in adult circadian pacemaker neurons in order to sustain high-amplitude circadian rhythms and Pdf cycling in a per-independent manner. Promotes the interaction between Atx2 and Not1 within the Atx2-Not1 RNP complex. Recruited to the 4EHP-GYF2 complex by Gyf, where it plays a role in 4EHP-GYF2 mediated translational repression and mRNA decay. This is ATP-dependent RNA helicase me31b (me31B) from Drosophila melanogaster (Fruit fly).